The primary structure comprises 216 residues: Somatotropin (216 aa).

The N-terminal stretch at 1–25 (MAPGSWFSPLFITVITLGLQWPQEA) is a signal peptide. H46 lines the Zn(2+) pocket. The cysteines at positions 78 and 189 are disulfide-linked. E198 contacts Zn(2+). C206 and C214 are disulfide-bonded.

It belongs to the somatotropin/prolactin family.

The protein resides in the secreted. Functionally, growth hormone plays an important role in growth control. The polypeptide is Somatotropin (GH) (Anas platyrhynchos (Mallard)).